The chain runs to 285 residues: (3S)-malyl-CoA thioesterase (285 aa).

Residues R70 and E122 each coordinate substrate. The Mg(2+) site is built by E122 and D148.

It belongs to the HpcH/HpaI aldolase family. As to quaternary structure, homodimer or homotrimer. Mg(2+) serves as cofactor.

The enzyme catalyses (S)-malyl-CoA + H2O = (S)-malate + CoA + H(+). In terms of biological role, catalyzes the hydrolysis of (3S)-malyl-CoA to (3S)-malate and free CoA. Inactive towards beta-methylmalyl-CoA and other CoA esters. The chain is (3S)-malyl-CoA thioesterase from Cereibacter sphaeroides (strain ATCC 17029 / ATH 2.4.9) (Rhodobacter sphaeroides).